The sequence spans 399 residues: Serine/threonine-protein kinase PknL (399 aa).

Topologically, residues 1–368 are cytoplasmic; the sequence is MVEAGTRDPL…FIWARQHARR (368 aa). The region spanning 19-278 is the Protein kinase domain; the sequence is YLVQAKIASG…IAMGADLEAI (260 aa). ATP-binding positions include 25–33 and lysine 48; that span reads IASGGTSTV. Position 32 is a phosphothreonine; by autocatalysis (threonine 32). Threonine 62 is subject to Phosphothreonine; by autocatalysis. The Proton acceptor role is filled by aspartate 142. Phosphothreonine; by autocatalysis is present on residues threonine 173, threonine 175, and threonine 323. The disordered stretch occupies residues 312-346; that stretch reads GQLGAKPVHHPTRQLTRQPGDCSEPASGSEPEHEP. A helical membrane pass occupies residues 369–389; the sequence is MVLVWVSVVLAITGLVASAAW. Over 390–399 the chain is Extracellular; it reads TIGSNLSGLL.

This sequence belongs to the protein kinase superfamily. Ser/Thr protein kinase family. In terms of processing, autophosphorylated. Thr-173 is required for autophosphorylation and transphosphorylation activities. Thr-175 is not necessary for autophosphorylation activity, but is required for full kinase activity.

It localises to the cell membrane. The catalysed reaction is L-seryl-[protein] + ATP = O-phospho-L-seryl-[protein] + ADP + H(+). It catalyses the reaction L-threonyl-[protein] + ATP = O-phospho-L-threonyl-[protein] + ADP + H(+). Functionally, phosphorylates the DNA-binding protein MT2231. May be involved in the regulation of cell division and cell envelope biosynthesis. The protein is Serine/threonine-protein kinase PknL (pknL) of Mycobacterium tuberculosis (strain CDC 1551 / Oshkosh).